The chain runs to 943 residues: Netrin receptor UNC5B-a (943 aa).

The N-terminal stretch at 1–30 is a signal peptide; sequence MYLSRNPSGAALAAILVALILSCNFPSSTA. The Extracellular segment spans residues 31–380; the sequence is GIEYSDVLPD…LESTGDVALY (350 aa). An Ig-like domain is found at 51–148; it reads PHFLLEPEDA…AGTTKSKRSY (98 aa). Disulfide bonds link C72–C133, C84–C131, C177–C228, C261–C298, C265–C302, C276–C288, C317–C351, C321–C356, and C329–C341. One can recognise an Ig-like C2-type domain in the interval 150–245; the sequence is RIAYLRKNFD…KRRSTTATVI (96 aa). N225 carries an N-linked (GlcNAc...) asparagine glycan. TSP type-1 domains lie at 249-303 and 305-357; these read NGGW…TMCP and DGGW…GLCM. N-linked (GlcNAc...) asparagine glycosylation is present at N350. Residues 381-401 form a helical membrane-spanning segment; the sequence is AGLVVAIFIVIILLMAVGIVV. Topologically, residues 402 to 943 are cytoplasmic; sequence YRRNCREFDT…MLVMATDGDC (542 aa). The ZU5 domain occupies 542–685; it reads NSVTGTFGSL…LGTYAFVGES (144 aa). Residues 688–836 form a UPA domain region; sequence RSAIKRLQLA…LEENVKSFDP (149 aa). In terms of domain architecture, Death spans 863–941; it reads KICNSLDAPN…EMMLVMATDG (79 aa).

It belongs to the unc-5 family. In terms of assembly, interacts (via extracellular domain) with flrt3 (via extracellular domain). Interacts with rnd1. In terms of processing, phosphorylated on cytoplasmic tyrosine residues. As to expression, in the developing visual system, it is expressed within the developing optic vesicles and later become restricted to the dorsal ciliary marginal zone, a site of retinoblast proliferation and differentiation.

The protein resides in the cell membrane. Functionally, plays a role in cell-cell adhesion during embryonic development. Receptor for netrin required for axon guidance. Mediates axon repulsion of neuronal growth cones in the developing nervous system upon ligand binding. The chain is Netrin receptor UNC5B-a (unc5b-a) from Xenopus laevis (African clawed frog).